Consider the following 292-residue polypeptide: Probable deoxyhypusine synthase (292 aa).

The active-site Nucleophile is K267.

Belongs to the deoxyhypusine synthase family. Requires NAD(+) as cofactor.

The enzyme catalyses [eIF5A protein]-L-lysine + spermidine = [eIF5A protein]-deoxyhypusine + propane-1,3-diamine. The protein operates within protein modification; eIF5A hypusination. Its function is as follows. Catalyzes the NAD-dependent oxidative cleavage of spermidine and the subsequent transfer of the butylamine moiety of spermidine to the epsilon-amino group of a specific lysine residue of the eIF-5A precursor protein to form the intermediate deoxyhypusine residue. This is Probable deoxyhypusine synthase (dys) from Pyrobaculum aerophilum (strain ATCC 51768 / DSM 7523 / JCM 9630 / CIP 104966 / NBRC 100827 / IM2).